The following is a 148-amino-acid chain: F420H(2)-dependent quinone reductase MT1609 (148 aa).

Residues Ala46–Thr48, Arg52–Met57, Val68–Leu71, Val79–Asn83, and Tyr125 each bind coenzyme F420-(gamma-Glu)n.

The protein belongs to the F420H(2)-dependent quinone reductase family.

It localises to the cell membrane. It carries out the reaction oxidized coenzyme F420-(gamma-L-Glu)(n) + a quinol + H(+) = reduced coenzyme F420-(gamma-L-Glu)(n) + a quinone. In terms of biological role, involved in a F420-dependent anti-oxidant mechanism that protects M.tuberculosis against oxidative stress and bactericidal agents. Catalyzes the F420H(2)-dependent two-electron reduction of quinones to dihydroquinones, thereby preventing the formation of cytotoxic semiquinones obtained by the one-electron reduction pathway. In vitro, catalyzes the reduction of menadione to menadiol; since menaquinone is the sole quinone electron carrier in the respiratory chain in M.tuberculosis, the physiological electron acceptor for Fqr-mediated F420H(2) oxidation is therefore likely to be the endogenous menaquinone found in the membrane fraction of M.tuberculosis. This is F420H(2)-dependent quinone reductase MT1609 from Mycobacterium tuberculosis (strain CDC 1551 / Oshkosh).